We begin with the raw amino-acid sequence, 503 residues long: GMP synthase [glutamine-hydrolyzing] (503 aa).

Positions 3 to 189 (PVLVVDFGSQ…AFLSSFAAPN (187 aa)) constitute a Glutamine amidotransferase type-1 domain. Residue C80 is the Nucleophile of the active site. Active-site residues include H165 and E167. One can recognise a GMPS ATP-PPase domain in the interval 190–380 (WDPEQTICGT…LGIPKHIVHR (191 aa)). 217–223 (SGGVDSV) is a binding site for ATP.

Homodimer.

The enzyme catalyses XMP + L-glutamine + ATP + H2O = GMP + L-glutamate + AMP + diphosphate + 2 H(+). The protein operates within purine metabolism; GMP biosynthesis; GMP from XMP (L-Gln route): step 1/1. Catalyzes the synthesis of GMP from XMP. This chain is GMP synthase [glutamine-hydrolyzing], found in Tropheryma whipplei (strain Twist) (Whipple's bacillus).